Consider the following 315-residue polypeptide: Ribosomal RNA small subunit methyltransferase H (315 aa).

S-adenosyl-L-methionine contacts are provided by residues 37-39 (GGH), aspartate 57, phenylalanine 83, aspartate 105, and glutamine 112.

It belongs to the methyltransferase superfamily. RsmH family.

It localises to the cytoplasm. The catalysed reaction is cytidine(1402) in 16S rRNA + S-adenosyl-L-methionine = N(4)-methylcytidine(1402) in 16S rRNA + S-adenosyl-L-homocysteine + H(+). Its function is as follows. Specifically methylates the N4 position of cytidine in position 1402 (C1402) of 16S rRNA. The protein is Ribosomal RNA small subunit methyltransferase H of Pseudomonas fluorescens (strain ATCC BAA-477 / NRRL B-23932 / Pf-5).